Consider the following 176-residue polypeptide: WASH complex subunit 3 (176 aa).

Residues 47-74 (ETKFVEMERQLQKTEAALIILEAKLASI) are a coiled coil. Disordered regions lie at residues 84-123 (ATEAPAISNQQRNEEASMVDTTEPPTTENPTEPELPPESV) and 152-176 (KMQSEGLEPRILDTPDLILADGQRE). Residues 104 to 115 (TTEPPTTENPTE) show a composition bias toward low complexity.

It belongs to the CCDC53 family. Component of the WASH complex.

The protein localises to the early endosome. In terms of biological role, acts at least in part as component of the WASH complex which may regulate wash nucleation-promoting factor (NPF) activity and is required for its membrane targeting during endosomal sorting. During embryogenesis, not involved in the wash-dependent developmental migration of hemocytes anteriorly from the tail. The protein is WASH complex subunit 3 of Drosophila melanogaster (Fruit fly).